A 152-amino-acid chain; its full sequence is Acidic phospholipase A2 homolog textilotoxin D chain (152 aa).

Positions 1-19 (MHPAHLLVLLGVCVSLLGA) are cleaved as a signal peptide. Intrachain disulfides connect Cys38–Cys104, Cys54–Cys151, Cys56–Cys72, Cys71–Cys132, Cys78–Cys125, Cys88–Cys118, and Cys111–Cys123. N-linked (GlcNAc...) asparagine glycosylation is present at Asn112.

It belongs to the phospholipase A2 family. Group I subfamily. D49 sub-subfamily. As to quaternary structure, heterohexamer. 2 forms exist: 2 A or 2 B chains, 2 C chains and 2 covalently-linked D chains, and 1 A or 1 B, 1 C, 2 covalently-linked D chains and 2 differentially glycosylated covalently-linked D chains. Textilotoxin was originally described as pentameric. In terms of tissue distribution, expressed by the venom gland.

The protein localises to the secreted. Functionally, snake venom oligomeric phospholipase A2 that has potent presynaptic neurotoxicity. Chain D is not itself neurotoxic, but it is essential for the neurotoxicity of textilotoxin. Chain D possesses a very low phospholipase activity. The protein is Acidic phospholipase A2 homolog textilotoxin D chain of Pseudonaja textilis (Eastern brown snake).